The chain runs to 402 residues: 3-dehydroquinate synthase (402 aa).

The protein belongs to the archaeal-type DHQ synthase family.

The enzyme catalyses 2-amino-2,3,7-trideoxy-D-lyxo-hept-6-ulosonate + NAD(+) + H2O = 3-dehydroquinate + NH4(+) + NADH + H(+). Functionally, catalyzes the oxidative deamination and cyclization of 2-amino-3,7-dideoxy-D-threo-hept-6-ulosonic acid (ADH) to yield 3-dehydroquinate (DHQ), which is fed into the canonical shikimic pathway of aromatic amino acid biosynthesis. This is 3-dehydroquinate synthase from Methanopyrus kandleri (strain AV19 / DSM 6324 / JCM 9639 / NBRC 100938).